The primary structure comprises 432 residues: Tyrosine-protein phosphatase non-receptor type 1 (432 aa).

Met-1 bears the N-acetylmethionine mark. Residues 3–277 (MEKEFEQIDK…RFSYLAVIEG (275 aa)) enclose the Tyrosine-protein phosphatase domain. Tyr-20 is subject to Phosphotyrosine. The residue at position 50 (Ser-50) is a Phosphoserine; by PKB/AKT1, CLK1 and CLK2. Tyr-66 is modified (phosphotyrosine; by EGFR). Substrate-binding positions include Asp-181 and 215–221 (CSAGIGR). Cys-215 (phosphocysteine intermediate) is an active-site residue. A Cysteine persulfide modification is found at Cys-215. Position 215 is an S-nitrosocysteine; in reversibly inhibited form (Cys-215). Phosphoserine; by CLK1 and CLK2 occurs at positions 242 and 243. Gln-262 contributes to the substrate binding site. Residues 297 to 322 (EDLEPPPEHVPPPPRPPKRTLEPHNG) form a disordered region. Phosphoserine is present on residues Ser-335, Ser-362, and Ser-364. The tract at residues 350 to 402 (SRAPSIAVHSMSSMSQDTEVRKRMVGGGLQSAQASVPTEEELSPTEEEQKAHR) is disordered. A Phosphothreonine modification is found at Thr-367.

The protein belongs to the protein-tyrosine phosphatase family. Non-receptor class 1 subfamily. In terms of assembly, interacts with EPHA3 (phosphorylated); dephosphorylates EPHA3 and may regulate its trafficking and function. Interacts with MET. Interacts with NCK1. Post-translationally, ser-50 is the major site of phosphorylation as compared to Ser-242 and Ser-243. Activated by phosphorylation at Ser-50. In terms of processing, S-nitrosylation of Cys-215 inactivates the enzyme activity. Sulfhydration at Cys-215 following endoplasmic reticulum stress inactivates the enzyme activity, promoting EIF2AK3/PERK activity. In terms of tissue distribution, found in several tissues including central nervous system, liver and kidney. A high level of expression was found in the hippocampus.

It is found in the endoplasmic reticulum membrane. It carries out the reaction O-phospho-L-tyrosyl-[protein] + H2O = L-tyrosyl-[protein] + phosphate. Tyrosine-protein phosphatase which acts as a regulator of endoplasmic reticulum unfolded protein response. Mediates dephosphorylation of EIF2AK3/PERK; inactivating the protein kinase activity of EIF2AK3/PERK. May play an important role in CKII- and p60c-src-induced signal transduction cascades. May regulate the EFNA5-EPHA3 signaling pathway which modulates cell reorganization and cell-cell repulsion. May also regulate the hepatocyte growth factor receptor signaling pathway through dephosphorylation of MET. The protein is Tyrosine-protein phosphatase non-receptor type 1 (Ptpn1) of Rattus norvegicus (Rat).